A 518-amino-acid polypeptide reads, in one-letter code: ATP synthase subunit alpha (518 aa).

An ATP-binding site is contributed by 169–176 (GDRKTGKT).

This sequence belongs to the ATPase alpha/beta chains family. As to quaternary structure, F-type ATPases have 2 components, CF(1) - the catalytic core - and CF(0) - the membrane proton channel. CF(1) has five subunits: alpha(3), beta(3), gamma(1), delta(1), epsilon(1). CF(0) has three main subunits: a(1), b(2) and c(9-12). The alpha and beta chains form an alternating ring which encloses part of the gamma chain. CF(1) is attached to CF(0) by a central stalk formed by the gamma and epsilon chains, while a peripheral stalk is formed by the delta and b chains.

It is found in the cell membrane. The enzyme catalyses ATP + H2O + 4 H(+)(in) = ADP + phosphate + 5 H(+)(out). Functionally, produces ATP from ADP in the presence of a proton gradient across the membrane. The alpha chain is a regulatory subunit. This Enterococcus hirae (strain ATCC 9790 / DSM 20160 / JCM 8729 / LMG 6399 / NBRC 3181 / NCIMB 6459 / NCDO 1258 / NCTC 12367 / WDCM 00089 / R) protein is ATP synthase subunit alpha.